Reading from the N-terminus, the 85-residue chain is RNA-binding protein Hfq (85 aa).

The region spanning 9–69 (DQLLNTARKD…ISTIIPAKII (61 aa)) is the Sm domain.

This sequence belongs to the Hfq family. In terms of assembly, homohexamer.

In terms of biological role, RNA chaperone that binds small regulatory RNA (sRNAs) and mRNAs to facilitate mRNA translational regulation in response to envelope stress, environmental stress and changes in metabolite concentrations. Also binds with high specificity to tRNAs. This is RNA-binding protein Hfq from Leptospira interrogans serogroup Icterohaemorrhagiae serovar copenhageni (strain Fiocruz L1-130).